Consider the following 301-residue polypeptide: Probable 2-(5''-triphosphoribosyl)-3'-dephosphocoenzyme-A synthase (301 aa).

This sequence belongs to the CitG/MdcB family.

It catalyses the reaction 3'-dephospho-CoA + ATP = 2'-(5''-triphospho-alpha-D-ribosyl)-3'-dephospho-CoA + adenine. This chain is Probable 2-(5''-triphosphoribosyl)-3'-dephosphocoenzyme-A synthase, found in Pectobacterium carotovorum subsp. carotovorum (strain PC1).